The chain runs to 130 residues: uncharacterized protein (130 aa).

The Cytoplasmic segment spans residues M1–K58. The segment at N34–K57 is disordered. A helical transmembrane segment spans residues D59 to Q79. At P80–L94 the chain is on the extracellular side. A helical membrane pass occupies residues F95–S115. Residues K116 to R130 lie on the Cytoplasmic side of the membrane.

It localises to the membrane. This is an uncharacterized protein from Saccharomyces cerevisiae (strain ATCC 204508 / S288c) (Baker's yeast).